The following is a 535-amino-acid chain: CTP synthase (535 aa).

Positions 1–267 (MTKYIFVTGG…DQIVCDHLKL (267 aa)) are amidoligase domain. A CTP-binding site is contributed by S13. S13 lines the UTP pocket. Position 14-19 (14-19 (SLGKGI)) interacts with ATP. Y54 is a binding site for L-glutamine. D71 lines the ATP pocket. The Mg(2+) site is built by D71 and E141. Residues 148–150 (DIE), 188–193 (KTKPTQ), and K224 contribute to the CTP site. Residues 188 to 193 (KTKPTQ) and K224 each bind UTP. 240 to 242 (RDA) lines the ATP pocket. The region spanning 292–534 (KIALVGKYVE…VRASITNKES (243 aa)) is the Glutamine amidotransferase type-1 domain. G354 is an L-glutamine binding site. The active-site Nucleophile; for glutamine hydrolysis is the C381. Residues 382–385 (LGMQ), E405, and R462 each bind L-glutamine. Residues H507 and E509 contribute to the active site.

Belongs to the CTP synthase family. In terms of assembly, homotetramer.

The catalysed reaction is UTP + L-glutamine + ATP + H2O = CTP + L-glutamate + ADP + phosphate + 2 H(+). It carries out the reaction L-glutamine + H2O = L-glutamate + NH4(+). The enzyme catalyses UTP + NH4(+) + ATP = CTP + ADP + phosphate + 2 H(+). It participates in pyrimidine metabolism; CTP biosynthesis via de novo pathway; CTP from UDP: step 2/2. Allosterically activated by GTP, when glutamine is the substrate; GTP has no effect on the reaction when ammonia is the substrate. The allosteric effector GTP functions by stabilizing the protein conformation that binds the tetrahedral intermediate(s) formed during glutamine hydrolysis. Inhibited by the product CTP, via allosteric rather than competitive inhibition. Functionally, catalyzes the ATP-dependent amination of UTP to CTP with either L-glutamine or ammonia as the source of nitrogen. Regulates intracellular CTP levels through interactions with the four ribonucleotide triphosphates. The protein is CTP synthase of Bacillus cereus (strain ATCC 10987 / NRS 248).